The chain runs to 143 residues: Large ribosomal subunit protein uL11 (143 aa).

This sequence belongs to the universal ribosomal protein uL11 family. As to quaternary structure, part of the ribosomal stalk of the 50S ribosomal subunit. Interacts with L10 and the large rRNA to form the base of the stalk. L10 forms an elongated spine to which L12 dimers bind in a sequential fashion forming a multimeric L10(L12)X complex. One or more lysine residues are methylated.

Its function is as follows. Forms part of the ribosomal stalk which helps the ribosome interact with GTP-bound translation factors. The protein is Large ribosomal subunit protein uL11 of Bifidobacterium longum subsp. infantis (strain ATCC 15697 / DSM 20088 / JCM 1222 / NCTC 11817 / S12).